Reading from the N-terminus, the 276-residue chain is NH(3)-dependent NAD(+) synthetase (276 aa).

46 to 53 provides a ligand contact to ATP; it reads GISGGQDS. Position 52 (aspartate 52) interacts with Mg(2+). Arginine 141 contributes to the deamido-NAD(+) binding site. An ATP-binding site is contributed by threonine 161. Glutamate 166 is a binding site for Mg(2+). Residues lysine 174 and aspartate 181 each contribute to the deamido-NAD(+) site. Residues lysine 190 and threonine 212 each contribute to the ATP site. 261 to 262 is a binding site for deamido-NAD(+); that stretch reads HK.

This sequence belongs to the NAD synthetase family. In terms of assembly, homodimer.

The catalysed reaction is deamido-NAD(+) + NH4(+) + ATP = AMP + diphosphate + NAD(+) + H(+). It functions in the pathway cofactor biosynthesis; NAD(+) biosynthesis; NAD(+) from deamido-NAD(+) (ammonia route): step 1/1. Catalyzes the ATP-dependent amidation of deamido-NAD to form NAD. Uses ammonia as a nitrogen source. This Limosilactobacillus fermentum (strain NBRC 3956 / LMG 18251) (Lactobacillus fermentum) protein is NH(3)-dependent NAD(+) synthetase.